A 156-amino-acid polypeptide reads, in one-letter code: uncharacterized protein (156 aa).

Disordered stretches follow at residues 22–64 (KERV…VLKK) and 81–156 (AARA…DENE). Residues 43-56 (PEEDGDHSDKEDEQ) are compositionally biased toward acidic residues. Ser-50 is subject to Phosphoserine. An N6-acetyllysine modification is found at Lys-108. Residues 121-134 (TKEEDEINKQDSVK) show a composition bias toward basic and acidic residues. The residue at position 148 (Ser-148) is a Phosphoserine.

This is an uncharacterized protein from Bos taurus (Bovine).